A 190-amino-acid polypeptide reads, in one-letter code: MAAFRTTAWRLISGVLGVICLVLMAALGVLLKNSLTKRSVQPGPSADLQEEYNLHEEEESCLGCLGSGCYSCQEKWIGYQCNCYFISNELKTWKDGRDFCVSHNSSLLQIQTRNEPAFMKFSTSFYWIGLSYDEEHHAWLWEDNSTLSQDLLPFFKSVNPKNCIMYNPRGRILDAYCEKKFRYICKQQLI.

Residues 1–10 (MAAFRTTAWR) are Cytoplasmic-facing. The chain crosses the membrane as a helical; Signal-anchor for type II membrane protein span at residues 11–31 (LISGVLGVICLVLMAALGVLL). Residues 32–190 (KNSLTKRSVQ…FRYICKQQLI (159 aa)) are Extracellular-facing. 4 disulfides stabilise this stretch: cysteine 69/cysteine 81, cysteine 72/cysteine 83, cysteine 100/cysteine 185, and cysteine 163/cysteine 177. Residues 79 to 186 (YQCNCYFISN…CEKKFRYICK (108 aa)) enclose the C-type lectin domain. N-linked (GlcNAc...) asparagine glycans are attached at residues asparagine 104 and asparagine 144.

As to quaternary structure, can form disulfide-bonded heterodimer with NKG2 family members KLRC1 and KLRC2. KLRD1-KLRC1 heterodimer interacts with peptide-bound MHC-E-B2M heterotrimeric complex. KLRD1 plays a prominent role in directly interacting with MHC-E. KLRD1-KLRC1 interacts with much higher affinity with peptide-bound MHC-E-B2M than KLRD1-KLRC2. Interacts with the adapter protein TYROBP/DAP12; this interaction is required for cell surface expression and cell activation.

It is found in the cell membrane. Its function is as follows. Immune receptor involved in self-nonself discrimination. In complex with KLRC1 or KLRC2 on cytotoxic and regulatory lymphocyte subsets, recognizes non-classical major histocompatibility (MHC) class Ib molecule MHC-E loaded with self-peptides derived from the signal sequence of classical MHC class Ia and non-classical MHC class Ib molecules. Enables cytotoxic cells to monitor the expression of MHC class I molecules in healthy cells and to tolerate self. Primarily functions as a ligand binding subunit as it lacks the capacity to signal. In terms of biological role, KLRD1-KLRC1 acts as an immune inhibitory receptor. Key inhibitory receptor on natural killer (NK) cells that regulates their activation and effector functions. Dominantly counteracts T cell receptor signaling on a subset of memory/effector CD8-positive T cells as part of an antigen-driven response to avoid autoimmunity. On intraepithelial CD8-positive gamma-delta regulatory T cells triggers TGFB1 secretion, which in turn limits the cytotoxic programming of intraepithelial CD8-positive alpha-beta T cells, distinguishing harmless from pathogenic antigens. In MHC-E-rich tumor microenvironment, acts as an immune inhibitory checkpoint and may contribute to progressive loss of effector functions of NK cells and tumor-specific T cells, a state known as cell exhaustion. Upon MHC-E-peptide binding, transmits intracellular signals through KLRC1 immunoreceptor tyrosine-based inhibition motifs (ITIMs) by recruiting INPP5D/SHIP-1 and INPPL1/SHIP-2 tyrosine phosphatases to ITIMs, and ultimately opposing signals transmitted by activating receptors through dephosphorylation of proximal signaling molecules. KLRD1-KLRC2 acts as an immune activating receptor. On cytotoxic lymphocyte subsets recognizes MHC-E loaded with signal sequence-derived peptides from non-classical MHC class Ib MHC-G molecules, likely playing a role in the generation and effector functions of adaptive NK cells and in maternal-fetal tolerance during pregnancy. Regulates the effector functions of terminally differentiated cytotoxic lymphocyte subsets, and in particular may play a role in adaptive NK cell response to viral infection. Upon MHC-E-peptide binding, transmits intracellular signals via the adapter protein TYROBP/DAP12, triggering the phosphorylation of proximal signaling molecules and cell activation. The polypeptide is Natural killer cells antigen CD94 (KLRD1) (Bos taurus (Bovine)).